Reading from the N-terminus, the 487-residue chain is Iron-sulfur cluster assembly SufBD family protein ycf24 (487 aa).

The protein belongs to the iron-sulfur cluster assembly SufBD family.

It is found in the plastid. The protein resides in the chloroplast. The protein is Iron-sulfur cluster assembly SufBD family protein ycf24 (ycf24) of Porphyra purpurea (Red seaweed).